The following is a 242-amino-acid chain: Terpene cyclase dpchB (242 aa).

Helical transmembrane passes span Val16–Val36, Ala51–Phe71, Tyr78–Val95, Leu114–Val134, Ala141–Cys161, Ser169–Ile189, and Ile207–Val227.

This sequence belongs to the paxB family.

It is found in the membrane. It participates in secondary metabolite biosynthesis; terpenoid biosynthesis. Terpene cyclase; part of the gene cluster that mediates the biosynthesis of the diterpenoid pyrones higginsianins A and B. The first step of the pathway is the synthesis of the alpha-pyrone moiety by the polyketide synthase dpchA via condensation of one acetyl-CoA starter unit with 3 malonyl-CoA units and 2 methylations. The alpha-pyrone is then combined with geranylgeranyl pyrophosphate (GGPP) formed by the GGPP synthase dpchD through the action of the prenyltransferase dpchC to yield a linear alpha-pyrone diterpenoid. Subsequent steps in the diterpenoid pyrone biosynthetic pathway involve the decalin core formation, which is initiated by the epoxidation of the C10-C11 olefin by the FAD-dependent oxidoreductase dpchE, and is followed by a cyclization cascade catalyzed by the terpene cyclase dpchB. The short chain dehydrogenase/reductase dpchG then oxidizes the 8S hydroxy group to a ketone and the short chain dehydrogenase/reductase dpchH reduces the ketone to the 8R hydroxy group to yield higginsianin B. Finally, the FAD-dependent oxidoreductase dpchF converts higginsianin B into higginsianin A. The protein is Terpene cyclase dpchB of Colletotrichum higginsianum (strain IMI 349063) (Crucifer anthracnose fungus).